The following is a 506-amino-acid chain: Glutamate--tRNA ligase (506 aa).

Positions 12 to 22 match the 'HIGH' region motif; the sequence is PSPTGDPHVGT. The 'KMSKS' region motif lies at 253-257; the sequence is KLSKR. Lys256 is an ATP binding site.

Belongs to the class-I aminoacyl-tRNA synthetase family. Glutamate--tRNA ligase type 1 subfamily. Monomer.

It is found in the cytoplasm. The enzyme catalyses tRNA(Glu) + L-glutamate + ATP = L-glutamyl-tRNA(Glu) + AMP + diphosphate. Functionally, catalyzes the attachment of glutamate to tRNA(Glu) in a two-step reaction: glutamate is first activated by ATP to form Glu-AMP and then transferred to the acceptor end of tRNA(Glu). The protein is Glutamate--tRNA ligase of Chlamydia trachomatis serovar A (strain ATCC VR-571B / DSM 19440 / HAR-13).